A 176-amino-acid polypeptide reads, in one-letter code: NAD(P)H-quinone oxidoreductase subunit I, chloroplastic (176 aa).

4Fe-4S ferredoxin-type domains follow at residues 55–84 (GRIHFEFDKCIACEVCVRVCPIDLPVVDWE) and 95–124 (LNYSIDFGICIFCGNCVEYCPTNCLSMTEE). Residues Cys-64, Cys-67, Cys-70, Cys-74, Cys-104, Cys-107, Cys-110, and Cys-114 each coordinate [4Fe-4S] cluster.

It belongs to the complex I 23 kDa subunit family. NDH is composed of at least 16 different subunits, 5 of which are encoded in the nucleus. It depends on [4Fe-4S] cluster as a cofactor.

It localises to the plastid. The protein resides in the chloroplast thylakoid membrane. It catalyses the reaction a plastoquinone + NADH + (n+1) H(+)(in) = a plastoquinol + NAD(+) + n H(+)(out). The catalysed reaction is a plastoquinone + NADPH + (n+1) H(+)(in) = a plastoquinol + NADP(+) + n H(+)(out). NDH shuttles electrons from NAD(P)H:plastoquinone, via FMN and iron-sulfur (Fe-S) centers, to quinones in the photosynthetic chain and possibly in a chloroplast respiratory chain. The immediate electron acceptor for the enzyme in this species is believed to be plastoquinone. Couples the redox reaction to proton translocation, and thus conserves the redox energy in a proton gradient. This chain is NAD(P)H-quinone oxidoreductase subunit I, chloroplastic, found in Populus alba (White poplar).